A 1185-amino-acid chain; its full sequence is Ovostatin homolog 1 (1185 aa).

The signal sequence occupies residues 1 to 21 (MHVHVCVCLCVCIYTSSCVCA). Residues Asn80, Asn155, Asn347, Asn452, and Asn725 are each glycosylated (N-linked (GlcNAc...) asparagine).

This sequence belongs to the protease inhibitor I39 (alpha-2-macroglobulin) family. In terms of assembly, homotetramer.

The protein localises to the secreted. Its function is as follows. Is able to inhibit all four classes of proteinases by a unique 'trapping' mechanism. This Homo sapiens (Human) protein is Ovostatin homolog 1 (OVOS1).